A 310-amino-acid chain; its full sequence is MVVSEKSKILIIGGTGYIGKYLVETSAKSGHPTFALIRESTLKNPEKSKLIDTFKSYGVTLLFGDISNQESLLKAIKQVDVVISTVGGQQFTDQVNIIKAIKEAGNIKRFLPSEFGFDVDHARAIEPAASLFALKVRIRRMIEAEGIPYTYVICNWFADFFLPNLGQLEAKTPPRDKVVIFGDGNPKAIYVKEEDIATYTIEAVDDPRTLNKTLHMRPPANILSFNEIVSLWEDKIGKTLEKLYLSEEDILQIVQEGPLPLRTNLAICHSVFVNGDSANFEVQPPTGVEATELYPKVKYTTVDEFYNKFV.

Residues 13 to 19, Arg38, and Lys47 each bind NADP(+); that span reads GGTGYIG. The active-site Proton acceptor is Lys135. Arg139 serves as a coordination point for NADP(+).

Belongs to the NmrA-type oxidoreductase family. Isoflavone reductase subfamily. As to quaternary structure, monomer. As to expression, expressed in roots and stems.

The protein resides in the cytoplasm. Its pathway is alkaloid biosynthesis; nicotine biosynthesis. NADPH-binding protein. Involved in the biosynthesis of pyridine alkaloid natural products, leading mainly to the production of anabasine, anatabine, nicotine and nornicotine, effective deterrents against herbivores with antiparasitic and pesticide properties (neurotoxins); nornicotine serves as the precursor in the synthesis of the carcinogen compound N'-nitrosonornicotine (NNN). Reductase involved in a late step of tobacco alkaloid biosynthesis. Triggers either the formation of a nicotinic acid-derived precursor or the final condensation reaction of tobacco alkaloids. The chain is Isoflavone reductase homolog A622 from Nicotiana sylvestris (Wood tobacco).